A 473-amino-acid chain; its full sequence is Siroheme synthase (473 aa).

Residues 1–222 (MNTQPHHSSP…GDESRADARL (222 aa)) form a precorrin-2 dehydrogenase /sirohydrochlorin ferrochelatase region. Residues 37–38 (EI) and 58–59 (EK) each bind NAD(+). The interval 233 to 473 (GEVWLVGAGP…QVVRHRVVSP (241 aa)) is uroporphyrinogen-III C-methyltransferase. Proline 242 provides a ligand contact to S-adenosyl-L-methionine. Aspartate 265 serves as the catalytic Proton acceptor. Lysine 287 serves as the catalytic Proton donor. S-adenosyl-L-methionine-binding positions include 318–320 (GGD), isoleucine 323, 348–349 (SA), methionine 401, and glycine 430.

In the N-terminal section; belongs to the precorrin-2 dehydrogenase / sirohydrochlorin ferrochelatase family. The protein in the C-terminal section; belongs to the precorrin methyltransferase family.

It carries out the reaction uroporphyrinogen III + 2 S-adenosyl-L-methionine = precorrin-2 + 2 S-adenosyl-L-homocysteine + H(+). The catalysed reaction is precorrin-2 + NAD(+) = sirohydrochlorin + NADH + 2 H(+). The enzyme catalyses siroheme + 2 H(+) = sirohydrochlorin + Fe(2+). The protein operates within cofactor biosynthesis; adenosylcobalamin biosynthesis; precorrin-2 from uroporphyrinogen III: step 1/1. It participates in cofactor biosynthesis; adenosylcobalamin biosynthesis; sirohydrochlorin from precorrin-2: step 1/1. Its pathway is porphyrin-containing compound metabolism; siroheme biosynthesis; precorrin-2 from uroporphyrinogen III: step 1/1. It functions in the pathway porphyrin-containing compound metabolism; siroheme biosynthesis; siroheme from sirohydrochlorin: step 1/1. The protein operates within porphyrin-containing compound metabolism; siroheme biosynthesis; sirohydrochlorin from precorrin-2: step 1/1. Its function is as follows. Multifunctional enzyme that catalyzes the SAM-dependent methylations of uroporphyrinogen III at position C-2 and C-7 to form precorrin-2 via precorrin-1. Then it catalyzes the NAD-dependent ring dehydrogenation of precorrin-2 to yield sirohydrochlorin. Finally, it catalyzes the ferrochelation of sirohydrochlorin to yield siroheme. The protein is Siroheme synthase of Gluconobacter oxydans (strain 621H) (Gluconobacter suboxydans).